The chain runs to 409 residues: Tyrosine--tRNA ligase (409 aa).

The 'HIGH' region motif lies at 54 to 63 (PTAPDIHLGH). Positions 238–242 (KMSKS) match the 'KMSKS' region motif. K241 is a binding site for ATP. The S4 RNA-binding domain maps to 347 to 407 (QGILRILREA…GKRKFARVKL (61 aa)).

This sequence belongs to the class-I aminoacyl-tRNA synthetase family. TyrS type 2 subfamily. As to quaternary structure, homodimer.

The protein resides in the cytoplasm. The enzyme catalyses tRNA(Tyr) + L-tyrosine + ATP = L-tyrosyl-tRNA(Tyr) + AMP + diphosphate + H(+). Its function is as follows. Catalyzes the attachment of tyrosine to tRNA(Tyr) in a two-step reaction: tyrosine is first activated by ATP to form Tyr-AMP and then transferred to the acceptor end of tRNA(Tyr). The sequence is that of Tyrosine--tRNA ligase from Bordetella parapertussis (strain 12822 / ATCC BAA-587 / NCTC 13253).